Here is a 423-residue protein sequence, read N- to C-terminus: Enolase (423 aa).

Glutamine 164 contributes to the (2R)-2-phosphoglycerate binding site. The active-site Proton donor is glutamate 206. 3 residues coordinate Mg(2+): aspartate 243, glutamate 289, and aspartate 316. (2R)-2-phosphoglycerate-binding residues include lysine 341, arginine 370, serine 371, and lysine 392. Lysine 341 functions as the Proton acceptor in the catalytic mechanism.

Belongs to the enolase family. Requires Mg(2+) as cofactor.

It localises to the cytoplasm. It is found in the secreted. The protein resides in the cell surface. It catalyses the reaction (2R)-2-phosphoglycerate = phosphoenolpyruvate + H2O. It participates in carbohydrate degradation; glycolysis; pyruvate from D-glyceraldehyde 3-phosphate: step 4/5. Its function is as follows. Catalyzes the reversible conversion of 2-phosphoglycerate (2-PG) into phosphoenolpyruvate (PEP). It is essential for the degradation of carbohydrates via glycolysis. This is Enolase from Desulfotalea psychrophila (strain LSv54 / DSM 12343).